A 389-amino-acid chain; its full sequence is MVSVAEIRQAQRAEGPATILAIGTANPPNCVDQSTYPDYYFRITNSEHMTELKEKFQRMCDKSMIKKRYMYLTEEILKENPNMCAYMAPSLDARQDMVVVEVPKLGKEAATKAIKEWGQPKSKITHLIFCTTSGVDMPGADYQLTKQLGLRPYVKRYMMYQQGCFAGGTVLRLAKDLAENNKGARVLVVCSEITAVTFRGPSDTHLDSLVGQALFGDGAAAVIVGSDPIPQVEKPLYELVWTAQTIAPDSEGAIDGHLREVGLTFHLLKDVPGIVSKNIDKALFEAFNPLNISDYNSIFWIAHPGGPAILDQVEQKLGLKPEKMKATRDVLSDYGNMSSACVLFILDEMRRKSAENGLKTTGEGLEWGVLFGFGPGLTIETVVLRSVAI.

The active site involves Cys-164.

It belongs to the thiolase-like superfamily. Chalcone/stilbene synthases family.

The enzyme catalyses (E)-4-coumaroyl-CoA + 3 malonyl-CoA + 3 H(+) = 2',4,4',6'-tetrahydroxychalcone + 3 CO2 + 4 CoA. The protein operates within secondary metabolite biosynthesis; flavonoid biosynthesis. Functionally, the primary product of this enzyme is 4,2',4',6'-tetrahydroxychalcone (also termed naringenin-chalcone or chalcone) which can under specific conditions spontaneously isomerize into naringenin. The chain is Chalcone synthase (CHS) from Pueraria montana var. lobata (Kudzu vine).